The primary structure comprises 538 residues: Putative cysteine ligase BshC (538 aa).

A coiled-coil region spans residues 419–445; that stretch reads IEAKRQIQAMEQLLAEKYSELASYLEE.

It belongs to the BshC family.

Functionally, involved in bacillithiol (BSH) biosynthesis. May catalyze the last step of the pathway, the addition of cysteine to glucosamine malate (GlcN-Mal) to generate BSH. This chain is Putative cysteine ligase BshC, found in Lysinibacillus sphaericus (strain C3-41).